The primary structure comprises 403 residues: Leu/Ile/Val-binding protein homolog 8 (403 aa).

The N-terminal stretch at 1–26 is a signal peptide; it reads MRLSRLLIGASLGVALSSTVFTAALA.

Belongs to the leucine-binding protein family.

Its function is as follows. Component of an amino-acid transport system. The polypeptide is Leu/Ile/Val-binding protein homolog 8 (Brucella abortus (strain 2308)).